The following is a 337-amino-acid chain: Dimethyladenosine transferase 1, mitochondrial (337 aa).

A mitochondrion-targeting transit peptide spans 1–84; the sequence is MSQVTARVLN…RSILRRQPQR (84 aa). S-adenosyl-L-methionine is bound by residues 38-41, Asn39, Leu41, Gly67, Glu89, Asp118, and Asn140; that span reads QNFL.

Belongs to the class I-like SAM-binding methyltransferase superfamily. rRNA adenine N(6)-methyltransferase family. KsgA subfamily.

It is found in the mitochondrion. Its function is as follows. Probable S-adenosyl-L-methionine-dependent methyltransferase which specifically dimethylates mitochondrial 12S rRNA at the conserved stem loop. The protein is Dimethyladenosine transferase 1, mitochondrial (mtTFB1) of Drosophila pseudoobscura pseudoobscura (Fruit fly).